A 211-amino-acid polypeptide reads, in one-letter code: Protein-L-isoaspartate O-methyltransferase (211 aa).

The active site involves Ser-60.

It belongs to the methyltransferase superfamily. L-isoaspartyl/D-aspartyl protein methyltransferase family.

Its subcellular location is the cytoplasm. It catalyses the reaction [protein]-L-isoaspartate + S-adenosyl-L-methionine = [protein]-L-isoaspartate alpha-methyl ester + S-adenosyl-L-homocysteine. In terms of biological role, catalyzes the methyl esterification of L-isoaspartyl residues in peptides and proteins that result from spontaneous decomposition of normal L-aspartyl and L-asparaginyl residues. It plays a role in the repair and/or degradation of damaged proteins. This Pseudomonas fluorescens (strain Pf0-1) protein is Protein-L-isoaspartate O-methyltransferase.